The primary structure comprises 842 residues: Elongation factor 2 (842 aa).

The tr-type G domain occupies 17–253 (TNVRNMSVIA…LWGDSYFNPK (237 aa)). Residues 26–33 (AHVDHGKS), 158–161 (NKVD), and 213–215 (SGL) contribute to the GTP site. His699 carries the diphthamide modification.

It belongs to the TRAFAC class translation factor GTPase superfamily. Classic translation factor GTPase family. EF-G/EF-2 subfamily.

It is found in the cytoplasm. It catalyses the reaction GTP + H2O = GDP + phosphate + H(+). In terms of biological role, catalyzes the GTP-dependent ribosomal translocation step during translation elongation. During this step, the ribosome changes from the pre-translocational (PRE) to the post-translocational (POST) state as the newly formed A-site-bound peptidyl-tRNA and P-site-bound deacylated tRNA move to the P and E sites, respectively. Catalyzes the coordinated movement of the two tRNA molecules, the mRNA and conformational changes in the ribosome. This chain is Elongation factor 2 (EFT1), found in Naumovozyma castellii (Yeast).